The chain runs to 149 residues: CCAAT/enhancer-binding protein gamma (149 aa).

Over residues 1-12 (MSKVSQQNSTPG) the composition is skewed to polar residues. The disordered stretch occupies residues 1–92 (MSKVSQQNST…SKQKAQDTLQ (92 aa)). Lysine 3 participates in a covalent cross-link: Glycyl lysine isopeptide (Lys-Gly) (interchain with G-Cter in SUMO2). The segment covering 28–37 (LQQVPQLVPA) has biased composition (low complexity). Basic and acidic residues predominate over residues 56–72 (SPMDRNSDEYRQRRERN). The bZIP domain occupies 62-125 (SDEYRQRRER…SVLKDLFLEH (64 aa)). The segment at 66-93 (RQRRERNNMAVKKSRLKSKQKAQDTLQR) is basic motif. The segment at 97 to 118 (LKEENERLEAKIKLLTKELSVL) is leucine-zipper. A disordered region spans residues 128–149 (NLADNVQPSSTENTTNPDKAGQ). Residues 131–149 (DNVQPSSTENTTNPDKAGQ) show a composition bias toward polar residues.

Belongs to the bZIP family. C/EBP subfamily. Binds DNA as a dimer and can form stable heterodimers with CEBPA and CEBPB. Interacts with ZNF638; this interaction increases transcriptional activation.

Its subcellular location is the nucleus. In terms of biological role, transcription factor that binds to the promoter and the enhancer regions of target genes. Binds to the enhancer element PRE-I (positive regulatory element-I) of the IL-4 gene. Binds to the promoter and the enhancer of the immunoglobulin heavy chain. Binds to GPE1, a cis-acting element in the G-CSF gene promoter. In Bos taurus (Bovine), this protein is CCAAT/enhancer-binding protein gamma (CEBPG).